Reading from the N-terminus, the 206-residue chain is MSRTLVLVRHGQSEWNLKNLFTGWRDPGLTEQGHAEAKAAGQRLKAAGLKFDIAYTSALSRAQVTCQHILDELGQPGLETIRDQALNERDYGDLSGLNKDDARAKWGEEQVHIWRRSYDVPPPGGESLKDTGARVWPYYLHTIQPHVLREETVLVAAHGNSLRALIMALDGLTPEQILKQELNTGVPIIYRLNADSTVASKEILSA.

Residues 9 to 16, 22 to 23, Arg-61, 88 to 91, Lys-99, 115 to 116, and 159 to 160 contribute to the substrate site; these read RHGQSEWN, TG, ERDY, RR, and GN. Catalysis depends on His-10, which acts as the Tele-phosphohistidine intermediate. Residue Glu-88 is the Proton donor/acceptor of the active site.

It belongs to the phosphoglycerate mutase family. BPG-dependent PGAM subfamily. Homodimer.

It catalyses the reaction (2R)-2-phosphoglycerate = (2R)-3-phosphoglycerate. Its pathway is carbohydrate degradation; glycolysis; pyruvate from D-glyceraldehyde 3-phosphate: step 3/5. Its function is as follows. Catalyzes the interconversion of 2-phosphoglycerate and 3-phosphoglycerate. This chain is 2,3-bisphosphoglycerate-dependent phosphoglycerate mutase, found in Brucella abortus (strain S19).